The sequence spans 247 residues: MEQFKGLQKSLYIWTDSADLDKRVEQLKTATGGEVAVENVHRLSFSSYANSSFDLIVIECAQLTDNYVKLLHMLKPSGKLHLFSFIGPASSLLQEIKLSGFINCSEGTDTLTAEKPGYETGSSARLSFAKKNASALNVWKISGDDEELIDEEDLLDEEDKQKPDPAGLKVCSTTGKRKACKNCSCGLAEELESEKQTATASENAKSSCGNCYLGDAFRCSTCPYLGMPAFKPGEKVQLADNLLKSDI.

The interval 4 to 128 (FKGLQKSLYI…ETGSSARLSF (125 aa)) is N-terminal SAM-like domain. The tract at residues 129–160 (AKKNASALNVWKISGDDEELIDEEDLLDEEDK) is linker. 4 residues coordinate [2Fe-2S] cluster: C171, C180, C183, and C185. A fe-S binding site A region spans residues 171–185 (CSTTGKRKACKNCSC). Residues C208, C211, C219, and C222 each coordinate [4Fe-4S] cluster. 2 short sequence motifs (cx2C motif) span residues 208-211 (CGNC) and 219-222 (CSTC). The segment at 208-222 (CGNCYLGDAFRCSTC) is fe-S binding site B.

Belongs to the anamorsin family. In terms of assembly, monomer. [2Fe-2S] cluster serves as cofactor. The cofactor is [4Fe-4S] cluster.

The protein resides in the cytoplasm. Its subcellular location is the mitochondrion intermembrane space. Its function is as follows. Component of the cytosolic iron-sulfur (Fe-S) protein assembly (CIA) machinery. Required for the maturation of extramitochondrial Fe-S proteins. Part of an electron transfer chain functioning in an early step of cytosolic Fe-S biogenesis, facilitating the de novo assembly of a [4Fe-4S] cluster on the cytosolic Fe-S scaffold complex. Electrons are transferred from NADPH via a FAD- and FMN-containing diflavin oxidoreductase. Together with the diflavin oxidoreductase, also required for the assembly of the diferric tyrosyl radical cofactor of ribonucleotide reductase (RNR), probably by providing electrons for reduction during radical cofactor maturation in the catalytic small subunit. This Drosophila persimilis (Fruit fly) protein is Anamorsin homolog.